Reading from the N-terminus, the 294-residue chain is N-acetylmuramic acid 6-phosphate etherase (294 aa).

In terms of domain architecture, SIS spans 56–219; that stretch reads TSYSLRNGGR…STLSMVSVGK (164 aa). The active-site Proton donor is glutamate 84. Glutamate 115 is a catalytic residue.

The protein belongs to the GCKR-like family. MurNAc-6-P etherase subfamily. Homodimer.

It catalyses the reaction N-acetyl-D-muramate 6-phosphate + H2O = N-acetyl-D-glucosamine 6-phosphate + (R)-lactate. It participates in amino-sugar metabolism; 1,6-anhydro-N-acetylmuramate degradation. It functions in the pathway amino-sugar metabolism; N-acetylmuramate degradation. The protein operates within cell wall biogenesis; peptidoglycan recycling. In terms of biological role, specifically catalyzes the cleavage of the D-lactyl ether substituent of MurNAc 6-phosphate, producing GlcNAc 6-phosphate and D-lactate. Together with AnmK, is also required for the utilization of anhydro-N-acetylmuramic acid (anhMurNAc) either imported from the medium or derived from its own cell wall murein, and thus plays a role in cell wall recycling. The chain is N-acetylmuramic acid 6-phosphate etherase from Francisella tularensis subsp. tularensis (strain SCHU S4 / Schu 4).